Here is a 701-residue protein sequence, read N- to C-terminus: MSQEKKVFKTEWAGRSLTIETGQLAKQANGAVLVRYGDTVVLSTATASKEPRDGDFFPLTVNYEEKMYAAGKIPGGFKKREGRPGDEATLTARLIDRPIRPLFPKGYRHDVQIMNIVLSADPDCSPEMAAMIGSSMALSVSDIPFQGPIAGVNVGYIDGKYVINPSVADKEISRLDLEVAGHKDAVNMVEAGASEITESEMLEAIFFGHEEIKRLVAFQQEIIDHIQPIKQEFVPVERDEDLVEKVKSLTEDKGLKDTVLTFDKQQRDENLDALKEEVVGHFLDEEDPENETLVKEVYAILNDLIKEEVRRLIADEKIRPDGRKVDEIRPLESEVGLLPRAHGSGLFTRGQTQALSVLTLGALGDYQLIDGLGPEVEKRFMHHYNFPNFSVGETGPVRAPGRREIGHGALGERALRYIIPDTQDFPYTIRIVSEVLESNGSSSQASICGSTLALMDAGVPIKAPVAGIAMGLVTRDDSYTILTDIQGMEDALGDMDFKVAGTKDGITAIQMDIKIDGLTREVIEEALEQARQGRLAIMDHMLHTIEQPREELSAYAPKVVTMSINPDKIRDVIGPGGKKINEIIDETGVKLDIEQDGTIFIGAVDQAMINRAKEIIEDITREAEVGQVYHAKVKRIEKYGAFVELFPGKDALLHISQISQERINKVEDVLKIGDTIEVKITEIDKQGRVNASHKVLEQSKN.

D490 and D496 together coordinate Mg(2+). Residues 557 to 616 (PKVVTMSINPDKIRDVIGPGGKKINEIIDETGVKLDIEQDGTIFIGAVDQAMINRAKEII) enclose the KH domain. One can recognise an S1 motif domain in the interval 626 to 694 (GQVYHAKVKR…KQGRVNASHK (69 aa)).

This sequence belongs to the polyribonucleotide nucleotidyltransferase family. Mg(2+) serves as cofactor.

The protein resides in the cytoplasm. It carries out the reaction RNA(n+1) + phosphate = RNA(n) + a ribonucleoside 5'-diphosphate. Involved in mRNA degradation. Catalyzes the phosphorolysis of single-stranded polyribonucleotides processively in the 3'- to 5'-direction. The protein is Polyribonucleotide nucleotidyltransferase of Staphylococcus epidermidis (strain ATCC 12228 / FDA PCI 1200).